A 270-amino-acid polypeptide reads, in one-letter code: Flavin-dependent thymidylate synthase (270 aa).

The region spanning 13–218 (GFVRLVDQMG…PLAWAAFEEH (206 aa)) is the ThyX domain. FAD contacts are provided by residues Ser59, 82 to 84 (RHR), and Glu90. Residues 79 to 82 (QWFR), 90 to 94 (EISGR), and Arg157 contribute to the dUMP site. Positions 82–92 (RHRTASVNEIS) match the ThyX motif motif. FAD contacts are provided by residues 173–175 (DLH) and His179. Arg184 lines the dUMP pocket. The active-site Involved in ionization of N3 of dUMP, leading to its activation is the Arg184.

It belongs to the thymidylate synthase ThyX family. Homotetramer. Requires FAD as cofactor.

The catalysed reaction is dUMP + (6R)-5,10-methylene-5,6,7,8-tetrahydrofolate + NADPH + H(+) = dTMP + (6S)-5,6,7,8-tetrahydrofolate + NADP(+). It functions in the pathway pyrimidine metabolism; dTTP biosynthesis. Catalyzes the reductive methylation of 2'-deoxyuridine-5'-monophosphate (dUMP) to 2'-deoxythymidine-5'-monophosphate (dTMP) while utilizing 5,10-methylenetetrahydrofolate (mTHF) as the methyl donor, and NADPH and FADH(2) as the reductant. This is Flavin-dependent thymidylate synthase from Thermus thermophilus (strain ATCC 27634 / DSM 579 / HB8).